We begin with the raw amino-acid sequence, 290 residues long: N-acetylmannosamine kinase (290 aa).

Residues 6–13 and 132–139 contribute to the ATP site; these read ALDIGGTK and GVGGGIIL. Zn(2+)-binding residues include histidine 156, cysteine 166, cysteine 168, and cysteine 173.

Belongs to the ROK (NagC/XylR) family. NanK subfamily. In terms of assembly, homodimer.

The catalysed reaction is an N-acyl-D-mannosamine + ATP = an N-acyl-D-mannosamine 6-phosphate + ADP + H(+). It participates in amino-sugar metabolism; N-acetylneuraminate degradation; D-fructose 6-phosphate from N-acetylneuraminate: step 2/5. Functionally, catalyzes the phosphorylation of N-acetylmannosamine (ManNAc) to ManNAc-6-P. In Yersinia pseudotuberculosis serotype O:3 (strain YPIII), this protein is N-acetylmannosamine kinase.